Reading from the N-terminus, the 123-residue chain is Large ribosomal subunit protein uL14 (123 aa).

Belongs to the universal ribosomal protein uL14 family. In terms of assembly, part of the 50S ribosomal subunit. Forms a cluster with proteins L3 and L19. In the 70S ribosome, L14 and L19 interact and together make contacts with the 16S rRNA in bridges B5 and B8.

Binds to 23S rRNA. Forms part of two intersubunit bridges in the 70S ribosome. The protein is Large ribosomal subunit protein uL14 of Photorhabdus laumondii subsp. laumondii (strain DSM 15139 / CIP 105565 / TT01) (Photorhabdus luminescens subsp. laumondii).